We begin with the raw amino-acid sequence, 415 residues long: Histidine--tRNA ligase (415 aa).

The protein belongs to the class-II aminoacyl-tRNA synthetase family. As to quaternary structure, homodimer.

The protein resides in the cytoplasm. The catalysed reaction is tRNA(His) + L-histidine + ATP = L-histidyl-tRNA(His) + AMP + diphosphate + H(+). In Rhodospirillum rubrum (strain ATCC 11170 / ATH 1.1.1 / DSM 467 / LMG 4362 / NCIMB 8255 / S1), this protein is Histidine--tRNA ligase.